An 80-amino-acid chain; its full sequence is Myrmicitoxin(1)-Pr1a (80 aa).

The signal sequence occupies residues 1 to 23 (MEIPKLLYIAVIAIGLSGSLTWA). Residues 24–57 (TPLANPLAEAEAEAKATAEATAEALAEALAEPEP) constitute a propeptide that is removed on maturation. Phe79 bears the Phenylalanine amide mark.

The protein belongs to the formicidae venom clade 1 family. As to expression, expressed by the venom gland.

The protein localises to the secreted. Vertebrate-selective toxin that causes pain by targeting voltage-gated sodium channels. The protein is Myrmicitoxin(1)-Pr1a of Pogonomyrmex rugosus (Desert harvester ant).